The primary structure comprises 735 residues: 1,4-alpha-glucan branching enzyme GlgB (735 aa).

Asp414 (nucleophile) is an active-site residue. Glu469 acts as the Proton donor in catalysis.

It belongs to the glycosyl hydrolase 13 family. GlgB subfamily. Monomer.

The catalysed reaction is Transfers a segment of a (1-&gt;4)-alpha-D-glucan chain to a primary hydroxy group in a similar glucan chain.. Its pathway is glycan biosynthesis; glycogen biosynthesis. In terms of biological role, catalyzes the formation of the alpha-1,6-glucosidic linkages in glycogen by scission of a 1,4-alpha-linked oligosaccharide from growing alpha-1,4-glucan chains and the subsequent attachment of the oligosaccharide to the alpha-1,6 position. This Burkholderia lata (strain ATCC 17760 / DSM 23089 / LMG 22485 / NCIMB 9086 / R18194 / 383) protein is 1,4-alpha-glucan branching enzyme GlgB.